The sequence spans 241 residues: Biosynthetic peptidoglycan transglycosylase (241 aa).

A helical membrane pass occupies residues 18 to 38 (GVIGIIALWMAGILIFAFLPV).

This sequence belongs to the glycosyltransferase 51 family.

It localises to the cell inner membrane. The catalysed reaction is [GlcNAc-(1-&gt;4)-Mur2Ac(oyl-L-Ala-gamma-D-Glu-L-Lys-D-Ala-D-Ala)](n)-di-trans,octa-cis-undecaprenyl diphosphate + beta-D-GlcNAc-(1-&gt;4)-Mur2Ac(oyl-L-Ala-gamma-D-Glu-L-Lys-D-Ala-D-Ala)-di-trans,octa-cis-undecaprenyl diphosphate = [GlcNAc-(1-&gt;4)-Mur2Ac(oyl-L-Ala-gamma-D-Glu-L-Lys-D-Ala-D-Ala)](n+1)-di-trans,octa-cis-undecaprenyl diphosphate + di-trans,octa-cis-undecaprenyl diphosphate + H(+). It functions in the pathway cell wall biogenesis; peptidoglycan biosynthesis. In terms of biological role, peptidoglycan polymerase that catalyzes glycan chain elongation from lipid-linked precursors. The sequence is that of Biosynthetic peptidoglycan transglycosylase from Yersinia pseudotuberculosis serotype O:1b (strain IP 31758).